The sequence spans 339 residues: Glycerol-3-phosphate dehydrogenase [NAD(P)+] (339 aa).

Residues serine 15, tyrosine 16, histidine 36, and lysine 110 each coordinate NADPH. Residues lysine 110, glycine 139, and threonine 141 each contribute to the sn-glycerol 3-phosphate site. Position 143 (alanine 143) interacts with NADPH. Sn-glycerol 3-phosphate-binding residues include lysine 195, aspartate 248, serine 258, arginine 259, and asparagine 260. Lysine 195 acts as the Proton acceptor in catalysis. Arginine 259 is a binding site for NADPH. NADPH is bound by residues valine 283 and glutamate 285.

Belongs to the NAD-dependent glycerol-3-phosphate dehydrogenase family.

It localises to the cytoplasm. It catalyses the reaction sn-glycerol 3-phosphate + NAD(+) = dihydroxyacetone phosphate + NADH + H(+). The enzyme catalyses sn-glycerol 3-phosphate + NADP(+) = dihydroxyacetone phosphate + NADPH + H(+). It functions in the pathway membrane lipid metabolism; glycerophospholipid metabolism. Catalyzes the reduction of the glycolytic intermediate dihydroxyacetone phosphate (DHAP) to sn-glycerol 3-phosphate (G3P), the key precursor for phospholipid synthesis. The protein is Glycerol-3-phosphate dehydrogenase [NAD(P)+] of Yersinia pseudotuberculosis serotype O:1b (strain IP 31758).